A 620-amino-acid polypeptide reads, in one-letter code: Zinc metalloproteinase-disintegrin-like ACLD (620 aa).

An N-terminal signal peptide occupies residues 1–20 (MIQVLLVTLCLAVFPYQGSS). Positions 21–189 (IILESGNVND…KKASQLNLTP (169 aa)) are excised as a propeptide. Positions 199–395 (KYVEFVVVLD…RRPKCILNEP (197 aa)) constitute a Peptidase M12B domain. Residue Glu-202 coordinates Ca(2+). Asn-259 and Asn-265 each carry an N-linked (GlcNAc...) asparagine glycan. Ca(2+) is bound at residue Asp-286. 3 disulfide bridges follow: Cys-310–Cys-390, Cys-350–Cys-374, and Cys-352–Cys-357. His-335 contacts Zn(2+). Glu-336 is an active-site residue. His-339 and His-345 together coordinate Zn(2+). Asn-373 is a glycosylation site (N-linked (GlcNAc...) asparagine). 2 residues coordinate Ca(2+): Cys-390 and Asn-393. The N-linked (GlcNAc...) asparagine glycan is linked to Asn-396. One can recognise a Disintegrin domain in the interval 403 to 489 (PPVCGNELLE…ECPTDRFQRN (87 aa)). Ca(2+)-binding residues include Val-405, Asn-408, Leu-410, Glu-412, Glu-415, and Asp-418. 14 cysteine pairs are disulfide-bonded: Cys-406–Cys-435, Cys-417–Cys-430, Cys-419–Cys-425, Cys-429–Cys-452, Cys-443–Cys-449, Cys-448–Cys-474, Cys-461–Cys-481, Cys-468–Cys-500, Cys-493–Cys-505, Cys-512–Cys-562, Cys-527–Cys-573, Cys-540–Cys-550, Cys-557–Cys-599, and Cys-593–Cys-604. Positions 467–469 (DCD) match the D/ECD-tripeptide motif. N-linked (GlcNAc...) asparagine glycans are attached at residues Asn-502 and Asn-536.

This sequence belongs to the venom metalloproteinase (M12B) family. P-III subfamily. P-IIIa sub-subfamily. Monomer. Zn(2+) serves as cofactor. In terms of tissue distribution, expressed by the venom gland.

It is found in the secreted. Inhibited by EDTA and O-phenanthroline. Not inhibited by PMSF, benzamidine, irreversible serine-proteinase inhibitors and cysteine proteinase inhibitor E-64. Functionally, is a potent activator of prothrombin (F2). Does not elicit any hemorrhagic response. Barely inhibits collagen-induced platelet aggregation. Binds neither collagen, nor the jararhagin-monoclonal antibody MAJar3. Hydrolyzes the Aalpha-chain of fibrin and fibrinogen, without affecting the Bbeta- and gamma-chains. Is capable of triggering endothelial pro-inflammatory and procoagulant cell responses, but fails to trigger apoptosis. Induces von Willebrand factor release, and the expression of both ICAM1 and E-selectin (SELE) (without increase in VCAM1) in endothelial cells (HUVEC). Is also able to up-regulate the synthesis of the coagulation factor TF (F3). Enhances nitric oxide (NO) generation, prostacyclin production and interleukin-8 release. The chain is Zinc metalloproteinase-disintegrin-like ACLD from Agkistrodon contortrix laticinctus (Broad-banded copperhead).